The following is a 645-amino-acid chain: Threonine--tRNA ligase (645 aa).

Residues 1–63 enclose the TGS domain; sequence MEQINIQFPD…ETDGSIEIVT (63 aa). Residues 242-540 form a catalytic region; it reads DHRKIGKELE…LTEETKGAFP (299 aa). Zn(2+) is bound by residues C336, H387, and H517.

The protein belongs to the class-II aminoacyl-tRNA synthetase family. As to quaternary structure, homodimer. Zn(2+) is required as a cofactor.

It is found in the cytoplasm. It catalyses the reaction tRNA(Thr) + L-threonine + ATP = L-threonyl-tRNA(Thr) + AMP + diphosphate + H(+). Functionally, catalyzes the attachment of threonine to tRNA(Thr) in a two-step reaction: L-threonine is first activated by ATP to form Thr-AMP and then transferred to the acceptor end of tRNA(Thr). Also edits incorrectly charged L-seryl-tRNA(Thr). The polypeptide is Threonine--tRNA ligase (Staphylococcus aureus (strain bovine RF122 / ET3-1)).